The primary structure comprises 1262 residues: Ras-specific guanine nucleotide-releasing factor 1 (1262 aa).

Positions 22–130 (DGTRKGYLSK…WVAAIARASY (109 aa)) constitute a PH 1 domain. Ser-71 carries the post-translational modification Phosphoserine; by PLK2. Residues 208–233 (KKIKKVQSFLRGWLCRRKWKNIIQDY) enclose the IQ domain. The 187-residue stretch at 244-430 (KRNQVVFSML…EELSRIMHDE (187 aa)) folds into the DH domain. The region spanning 460-588 (TFVRQGSLMQ…WTSDIIQCVD (129 aa)) is the PH 2 domain. Phosphoserine; by PLK2 is present on residues Ser-581 and Ser-617. Residues 635–749 (KVLQIRYASV…RRRKLSLNIP (115 aa)) enclose the N-terminal Ras-GEF domain. Positions 714 to 738 (DAPKSPRASRKFSSPPPLAIGTSSP) are disordered. Phosphoserine is present on Ser-745. Ser-766 is subject to Phosphoserine; by PLK2. Positions 800–854 (EEIDVPATIPEKPGELSASRKHSSDVLKEESEDDQNHSDEDNTEVSPVKSPPTPK) are disordered. A compositionally biased stretch (basic and acidic residues) spans 821 to 839 (HSSDVLKEESEDDQNHSDE). The 233-residue stretch at 1027–1259 (PALEIAEQLT…YESSLLIEPK (233 aa)) folds into the Ras-GEF domain.

As to quaternary structure, homooligomer and heterooligomer with RASGRF2. Interacts with USP8, thereby regulating its stability. In terms of processing, phosphorylated by PLK2, leading to ubiquitination and degradation by the proteasome. Ubiquitinated and degraded following phosphorylation by PLK2. Post-translationally, phosphorylated by SRC and LCK. Phosphorylation by LCK increases its capacity to stimulate the GDP/GTP exchange on Ras, whereas its phosphorylation by SRC seems not to have an effect on stimulation activity. In terms of tissue distribution, brain.

In terms of biological role, promotes the exchange of Ras-bound GDP by GTP. This chain is Ras-specific guanine nucleotide-releasing factor 1 (Rasgrf1), found in Mus musculus (Mouse).